A 540-amino-acid polypeptide reads, in one-letter code: CTP synthase (540 aa).

Residues 1 to 273 (MNNKDLKTKF…DDFILQHFKL (273 aa)) are amidoligase domain. Ser-19 is a CTP binding site. Ser-19 is a binding site for UTP. 20 to 25 (SLGKGI) lines the ATP pocket. Residue Tyr-60 participates in L-glutamine binding. Asp-77 serves as a coordination point for ATP. Mg(2+) is bound by residues Asp-77 and Glu-147. Residues 154–156 (DIE), 194–199 (KTKPTQ), and Lys-230 contribute to the CTP site. Residues 194 to 199 (KTKPTQ) and Lys-230 contribute to the UTP site. One can recognise a Glutamine amidotransferase type-1 domain in the interval 306–539 (YIVLHDAYLS…VEASLLNQKN (234 aa)). Residue Gly-361 coordinates L-glutamine. Catalysis depends on Cys-388, which acts as the Nucleophile; for glutamine hydrolysis. L-glutamine is bound by residues 389 to 392 (LGMQ), Glu-412, and Arg-466. Catalysis depends on residues His-512 and Glu-514.

The protein belongs to the CTP synthase family. Homotetramer.

It carries out the reaction UTP + L-glutamine + ATP + H2O = CTP + L-glutamate + ADP + phosphate + 2 H(+). It catalyses the reaction L-glutamine + H2O = L-glutamate + NH4(+). The enzyme catalyses UTP + NH4(+) + ATP = CTP + ADP + phosphate + 2 H(+). Its pathway is pyrimidine metabolism; CTP biosynthesis via de novo pathway; CTP from UDP: step 2/2. Allosterically activated by GTP, when glutamine is the substrate; GTP has no effect on the reaction when ammonia is the substrate. The allosteric effector GTP functions by stabilizing the protein conformation that binds the tetrahedral intermediate(s) formed during glutamine hydrolysis. Inhibited by the product CTP, via allosteric rather than competitive inhibition. Functionally, catalyzes the ATP-dependent amination of UTP to CTP with either L-glutamine or ammonia as the source of nitrogen. Regulates intracellular CTP levels through interactions with the four ribonucleotide triphosphates. In Onion yellows phytoplasma (strain OY-M), this protein is CTP synthase.